Consider the following 137-residue polypeptide: Basic phospholipase A2 homolog Ts-R6 (137 aa).

Positions 1–16 are cleaved as a signal peptide; that stretch reads MRTLWIMAVLLLGVEG. 7 cysteine pairs are disulfide-bonded: cysteine 42–cysteine 130, cysteine 44–cysteine 60, cysteine 59–cysteine 110, cysteine 65–cysteine 137, cysteine 66–cysteine 103, cysteine 73–cysteine 97, and cysteine 91–cysteine 101.

As to expression, expressed by the venom gland.

It is found in the secreted. In terms of biological role, snake venom phospholipase A2 homolog that induces local edema a few hours after injection (5-10 ug) in the hind paw and shows weak anticoagulant and myotoxic activities. In Trimeresurus stejnegeri (Chinese green tree viper), this protein is Basic phospholipase A2 homolog Ts-R6.